The following is a 457-amino-acid chain: Multidrug resistance protein MdtK (457 aa).

A run of 12 helical transmembrane segments spans residues 11 to 31 (LLALAIPVILAQIAQTAMGFV), 53 to 73 (IWLPAILFGHGLLLALTPVIA), 93 to 113 (WLAGFVSVLIMLVLWNAGYII), 127 to 147 (AVGYLRALLWGAPGYLFFQVA), 160 to 180 (GMVMGFIGLLVNIPVNYIFIY), 189 to 209 (GGVGCGVATAAVYWVMFLAMV), 243 to 263 (LPIALALFFEVTLFAVVALLV), 276 to 296 (IALNFSSLMFVLPMSLAAAVT), 314 to 334 (AARTGLMVGVCMATLTAIFTV), 350 to 370 (VVTLAAHLMLLAAVYQISDSI), 387 to 407 (IFYITFTAYWVLGLPSGYILA), and 418 to 438 (PAGFWIGFIIGLTSAAIMMML).

This sequence belongs to the multi antimicrobial extrusion (MATE) (TC 2.A.66.1) family. MdtK subfamily.

It is found in the cell inner membrane. Multidrug efflux pump that functions probably as a Na(+)/drug antiporter. The protein is Multidrug resistance protein MdtK of Escherichia coli O127:H6 (strain E2348/69 / EPEC).